Here is a 162-residue protein sequence, read N- to C-terminus: Phosphopantetheine adenylyltransferase (162 aa).

Threonine 10 is a substrate binding site. ATP-binding positions include 10-11 and histidine 18; that span reads TF. Substrate is bound by residues lysine 42, leucine 74, and arginine 88. Residues 89 to 91, glutamate 99, and 124 to 130 contribute to the ATP site; these read GLR and FSCISST.

The protein belongs to the bacterial CoaD family. In terms of assembly, homohexamer. Mg(2+) is required as a cofactor.

Its subcellular location is the cytoplasm. The enzyme catalyses (R)-4'-phosphopantetheine + ATP + H(+) = 3'-dephospho-CoA + diphosphate. The protein operates within cofactor biosynthesis; coenzyme A biosynthesis; CoA from (R)-pantothenate: step 4/5. Its function is as follows. Reversibly transfers an adenylyl group from ATP to 4'-phosphopantetheine, yielding dephospho-CoA (dPCoA) and pyrophosphate. This chain is Phosphopantetheine adenylyltransferase, found in Francisella philomiragia subsp. philomiragia (strain ATCC 25017 / CCUG 19701 / FSC 153 / O#319-036).